The sequence spans 285 residues: TATA box-binding protein-associated factor RNA polymerase I subunit D (285 aa).

Disordered stretches follow at residues 1-49 (MAQS…RIPT) and 85-112 (KKKRKKRKKRKYKPKLRRQGRPSGTRNI). Polar residues predominate over residues 21–39 (GNQSDDSSNSSLFKTQCVP). At serine 24 the chain carries Phosphoserine. Basic residues predominate over residues 85–104 (KKKRKKRKKRKYKPKLRRQG). The residue at position 134 (serine 134) is a Phosphoserine. The tract at residues 193-219 (HKYMDDDGPLSPIEEPSTEDEATDPQS) is disordered. The residue at position 229 (serine 229) is a Phosphoserine. 2 stretches are compositionally biased toward basic and acidic residues: residues 242-264 (NLEQGKIKKESAFSKKSKAKDAT) and 273-285 (KGGEHACLHSEVS). The interval 242 to 285 (NLEQGKIKKESAFSKKSKAKDATQRGNRRSWKGGEHACLHSEVS) is disordered.

In terms of assembly, component of the transcription factor SL1/TIF-IB complex, composed of TBP and at least TAF1A, TAF1B, TAF1C and TAF1D. Interacts with UBTF.

It localises to the nucleus. Functionally, component of the transcription factor SL1/TIF-IB complex, which is involved in the assembly of the PIC (preinitiation complex) during RNA polymerase I-dependent transcription. The rate of PIC formation probably is primarily dependent on the rate of association of SL1/TIF-IB with the rDNA promoter. SL1/TIF-IB is involved in stabilization of nucleolar transcription factor 1/UBTF on rDNA. Formation of SL1/TIF-IB excludes the association of TBP with TFIID subunits. The chain is TATA box-binding protein-associated factor RNA polymerase I subunit D (Taf1d) from Rattus norvegicus (Rat).